Reading from the N-terminus, the 354-residue chain is Protein RecA (354 aa).

65–72 (GPESSGKT) is a binding site for ATP.

It belongs to the RecA family.

It localises to the cytoplasm. Functionally, can catalyze the hydrolysis of ATP in the presence of single-stranded DNA, the ATP-dependent uptake of single-stranded DNA by duplex DNA, and the ATP-dependent hybridization of homologous single-stranded DNAs. It interacts with LexA causing its activation and leading to its autocatalytic cleavage. This chain is Protein RecA, found in Vibrio cholerae serotype O1 (strain ATCC 39315 / El Tor Inaba N16961).